Consider the following 555-residue polypeptide: CTP synthase (555 aa).

The amidoligase domain stretch occupies residues 1–267 (MAKFVFVTGG…CKEVLDCLDL (267 aa)). Ser13 is a binding site for CTP. Ser13 contributes to the UTP binding site. Residues 14–19 (SIGKGI) and Asp71 contribute to the ATP site. Mg(2+) is bound by residues Asp71 and Glu141. Residues 148–150 (DIE), 188–193 (KTKPTQ), and Lys224 each bind CTP. UTP-binding positions include 188 to 193 (KTKPTQ) and Lys224. The 243-residue stretch at 292–534 (KVALVGKYVQ…IQAAQIRVPS (243 aa)) folds into the Glutamine amidotransferase type-1 domain. L-glutamine is bound at residue Gly354. Cys381 functions as the Nucleophile; for glutamine hydrolysis in the catalytic mechanism. L-glutamine is bound by residues 382–385 (LGMQ), Glu405, and Arg462. Active-site residues include His507 and Glu509. The segment at 536–555 (PSEAFNPQSKIIEKKSLEQQ) is disordered. Over residues 546 to 555 (IIEKKSLEQQ) the composition is skewed to basic and acidic residues.

This sequence belongs to the CTP synthase family. Homotetramer.

It catalyses the reaction UTP + L-glutamine + ATP + H2O = CTP + L-glutamate + ADP + phosphate + 2 H(+). It carries out the reaction L-glutamine + H2O = L-glutamate + NH4(+). The catalysed reaction is UTP + NH4(+) + ATP = CTP + ADP + phosphate + 2 H(+). The protein operates within pyrimidine metabolism; CTP biosynthesis via de novo pathway; CTP from UDP: step 2/2. Its activity is regulated as follows. Allosterically activated by GTP, when glutamine is the substrate; GTP has no effect on the reaction when ammonia is the substrate. The allosteric effector GTP functions by stabilizing the protein conformation that binds the tetrahedral intermediate(s) formed during glutamine hydrolysis. Inhibited by the product CTP, via allosteric rather than competitive inhibition. Catalyzes the ATP-dependent amination of UTP to CTP with either L-glutamine or ammonia as the source of nitrogen. Regulates intracellular CTP levels through interactions with the four ribonucleotide triphosphates. In Prochlorococcus marinus (strain NATL1A), this protein is CTP synthase.